Here is a 313-residue protein sequence, read N- to C-terminus: Protein TIFY 4A (313 aa).

Positions 118–149 (SPRSAEFSGGSGHFVSEKDGHKTTISPRSPAE) are disordered. The Tify domain occupies 150 to 185 (TSELVGQMTIFYSGKVNVYDGIPPEKARSIMHFAAN). 2 disordered regions span residues 220–256 (KANSSRDSGMEGQANRKVSLQRYREKRKDRKFSKAKK) and 281–313 (QNLGCTGSPLHSQSPESQTKSPNLSVDLNSEGI). A Jas motif is present at residues 232 to 254 (QANRKVSLQRYREKRKDRKFSKA). Positions 234–241 (NRKVSLQR) match the Nuclear localization signal motif. The segment covering 243-256 (REKRKDRKFSKAKK) has biased composition (basic residues).

Belongs to the TIFY/JAZ family. Interacts with AFPH2/NINJA.

The protein localises to the nucleus. In terms of biological role, regulates the arrest of dispersed meristematic cells during lamina development. This Arabidopsis thaliana (Mouse-ear cress) protein is Protein TIFY 4A (TIFY4A).